The primary structure comprises 948 residues: MAQQYQPGQRWISDSEAELGLGTILAQDGRLLTVLYPATGDTRQYSLRNAPLTRVRFSPGDQITHFEGWKLTVREVEDIDGLMVYHGLDGQNQPRTLPETQLSNFIQFRLASDRLFAGQIDPLSWFSLRYNTLQHTSKQMQSALWGLGGCRAQPIAHQLHIAREVADRSAPRVLLADEVGLGKTIEAGLVIHRQLLSGRASRVLILVPENLQHQWLVEMRRRFNLQVALFDAERFIESDASNPFEDAQLALVALEWLVDDEKAQDALFAAGWDLMVVDEAHHLVWHEDQVSAEYGLVEQLAQVIPGVLLLTATPEQLGQDSHFARLRLLDPNRFHDLAAFRAESEHYRPVAEAVQELLDEGRLSPKAHATILGFLGAEGEALLAAVSDGDTQASARLIRELLDRHGTGRVLFRNTRAAIQGFPERQLHPYPLATPEQYRNLPAGEHAELYPEVAFQAQGEVADDERWWRFDPRVDWLIDTLKMLKRTKVLVICAHAETAMDLEDALRVRSGIPASVFHEGMSILERDRAAAYFADEEFGAQVLICSEIGSEGRNFQFAHHLVMFDLPAHPDLLEQRIGRLDRIGQKHTIQLHIPYLQDSPQERLFQWYHEGLNAFLNTCPTGNALQHQFGPRLLPLLEGGDHKAWDTLVADARSERERLEAELHTGRDRLLELNSGGAGEGQALVEAILEQDDQFALPIYMETLFDAFGIDSEDHSENALILKPSEKMLDASFPLGDDEGVTITYDRGQALSREDMQFLTWEHPMVQGGMDLVLSGSMGNTAVALIKNKALKPGTVLLELLFVSEVVAPRSLQLGRYLPPAALRCLLDANGNDLASRVAFETLNDQLESVPRASANKFVQAQRDVLAKRISGGEEKILPAHNERVAEAQRRLTAEADEELARLVALQAVNPSVRDSEIDALRKRREDGLAMLEKAALRLEAIRVLVAG.

The Helicase ATP-binding domain maps to 164-332 (EVADRSAPRV…FARLRLLDPN (169 aa)). 177 to 184 (DEVGLGKT) is a binding site for ATP. Positions 278-281 (DEAH) match the DEAH box motif. The region spanning 473–627 (RVDWLIDTLK…TCPTGNALQH (155 aa)) is the Helicase C-terminal domain.

It belongs to the SNF2/RAD54 helicase family. RapA subfamily. As to quaternary structure, interacts with the RNAP. Has a higher affinity for the core RNAP than for the holoenzyme. Its ATPase activity is stimulated by binding to RNAP.

Its function is as follows. Transcription regulator that activates transcription by stimulating RNA polymerase (RNAP) recycling in case of stress conditions such as supercoiled DNA or high salt concentrations. Probably acts by releasing the RNAP, when it is trapped or immobilized on tightly supercoiled DNA. Does not activate transcription on linear DNA. Probably not involved in DNA repair. This Pseudomonas putida (strain ATCC 700007 / DSM 6899 / JCM 31910 / BCRC 17059 / LMG 24140 / F1) protein is RNA polymerase-associated protein RapA.